The primary structure comprises 60 residues: Large ribosomal subunit protein uL30 (60 aa).

The protein belongs to the universal ribosomal protein uL30 family. As to quaternary structure, part of the 50S ribosomal subunit.

The sequence is that of Large ribosomal subunit protein uL30 from Alcanivorax borkumensis (strain ATCC 700651 / DSM 11573 / NCIMB 13689 / SK2).